Consider the following 93-residue polypeptide: Bombyxin-related peptide B (93 aa).

The N-terminal stretch at 1–21 (MKFVLVLVSLALLVSLASVQG) is a signal peptide. 3 cysteine pairs are disulfide-bonded: C25–C80, C37–C93, and C79–C84. Positions 47–71 (SGAMGAAAMYGTRGWRWAAMGGNRG) are cleaved as a propeptide — c peptide like.

This sequence belongs to the insulin family. Heterodimer of a B chain and an A chain linked by two disulfide bonds. In terms of tissue distribution, located in 4 pairs of medial neurosecretory cells in the brain.

Its subcellular location is the secreted. In Agrius convolvuli (Convolvulus hawk-moth), this protein is Bombyxin-related peptide B.